The sequence spans 742 residues: Alginate lyase (742 aa).

Positions 1–26 are cleaved as a signal peptide; that stretch reads MRLQPLFVSLALAAPCALLPTASLSA. Substrate-binding positions include arginine 143, 153-156, glutamine 204, histidine 208, and 263-266; these read QVLN and YYQR. The Proton donor role is filled by tyrosine 264. Histidine 418 serves as the catalytic Proton acceptor. Residues histidine 420 and aspartate 438 each contribute to the Zn(2+) site. Residue arginine 443 participates in substrate binding. Histidine 469 contributes to the Zn(2+) binding site. Substrate is bound at residue glutamate 669.

The protein belongs to the polysaccharide lyase 17 family. In terms of assembly, homodimer. Zn(2+) is required as a cofactor.

It is found in the periplasm. It carries out the reaction Cleavage of 4-deoxy-alpha-L-erythro-hex-4-enopyranuronoside oligosaccharides into 4-deoxy-alpha-L-erythro-hex-4-enopyranuronate monosaccharides.. Polysaccharide lyase that catalyzes the depolymerization of alginate via a beta-elimination mechanism, cleaving the beta-1,4 glycosidic bond between two adjacent sugar residues. Acts specifically on alginate and each of its block structures, with highest activity toward poly-beta-D-mannuronate (poly-ManA). Shows an exolytic mode of action, producing unsaturated monomers. Displays a very low activity against poly-beta-D-glucuronate (poly-GlcA), and is not active on poly-alpha-D-galacturonate, hyaluronan, heparin, heparan sulfate and chondroitin sulfate. This chain is Alginate lyase, found in Stenotrophomonas maltophilia (strain K279a).